The primary structure comprises 70 residues: Large ribosomal subunit protein bL31 (70 aa).

Lys8 carries the post-translational modification N6-acetyllysine. Zn(2+) is bound by residues Cys16, Cys18, Cys37, and Cys40.

It belongs to the bacterial ribosomal protein bL31 family. Type A subfamily. In terms of assembly, part of the 50S ribosomal subunit. Requires Zn(2+) as cofactor.

Binds the 23S rRNA. In Escherichia coli O6:K15:H31 (strain 536 / UPEC), this protein is Large ribosomal subunit protein bL31.